We begin with the raw amino-acid sequence, 910 residues long: MSRFFANGSDSESESSEDEIQATNFNKASAFQFSDDEEEVKRVVRSTKEKRYENLTSIIKTIRNHKKIKDIPNTLSSFEDLTRAYQKALPVISKEENGITPRFYIRCLAELEDFINEVWEDREGRKNLSKNNSKSLGTLRQKVRKYIKDFEDDLSRFREAPDQESEAEDEVVAQESDGGDAGDDSDAGVKPTEAAPKAVKSAPAKAAPADDDDSDDSIDWDSDSESETESSDDENQYQNMRERFLKRTTEKEEKDDDKRKDKRKEQKVKIRKRAEDDEDGEWETVVKGHVVEKPKMFEKDAEIDVPLVLAKLLEIMSARGKKRTDRRLQIDLLFELRDISDQHNLGTAVSVKIHFNIISAIYDYNQKISEPMKLEHWALLLEVMQSMLKLLLANTDIIMSESVAEEHEEYVTAPFYVRGCPLAAVERLDDEFVKLLKECDPHSNDYVSRLKDEVNVVKTIELVLQYFERSGTNNERCRIYLRKIEHLYYKFDPEVLKKKRNEVPATTSTSVDVMDKLCKFIYAKDDTDRIRTRAILAHIYHHAMHDNWFQARDLVLMSHLQDNIDAADPATRILYNRMMANLGLCAFRQENVKDAHHCLVDLMVTGKPKELLAQGLLPQRQHERSAEQEKIEKQRQMPFHMHINLELLECVYLVSAMLLEIPYIAAHEFDARRRMISKTFYQQLRSSERQSLVGPPESMREHVVAAAKAMRCGNWQACANFIVNKKMNTKVWDLFYESDRVREMLTKFIKEESLRTYLFTYSNVYTSISIPSLAQMYELPVPKVHSIISKMIINEELMASLDDPSETVVMHRSEPSRLQALAMQFVDKVTNLVDVNEKVFDMKQGNFFQRGNMGNRGDRGYNRNQNNQGGNWLGQRRDRNNRNRNQRGHHKNNQDRQQQQQQQVQTIDEE.

A disordered region spans residues 1 to 21 (MSRFFANGSDSESESSEDEIQ). Residues 11–20 (SESESSEDEI) are compositionally biased toward acidic residues. Residues serine 34, serine 165, serine 176, and serine 185 each carry the phosphoserine modification. Residues 157 to 281 (FREAPDQESE…KRAEDDEDGE (125 aa)) are disordered. Residues 162-186 (DQESEAEDEVVAQESDGGDAGDDSD) show a composition bias toward acidic residues. Residues 193-207 (EAAPKAVKSAPAKAA) show a composition bias toward low complexity. The span at 209-235 (ADDDDSDDSIDWDSDSESETESSDDEN) shows a compositional bias: acidic residues. Over residues 240–268 (MRERFLKRTTEKEEKDDDKRKDKRKEQKV) the composition is skewed to basic and acidic residues. Residues 639–815 (FHMHINLELL…ETVVMHRSEP (177 aa)) enclose the PCI domain. The interval 847 to 910 (FFQRGNMGNR…QQQVQTIDEE (64 aa)) is disordered. Positions 862 to 874 (NRNQNNQGGNWLG) are enriched in low complexity. Positions 882–891 (RNRNQRGHHK) are enriched in basic residues. Residues 895–910 (DRQQQQQQQVQTIDEE) show a composition bias toward low complexity.

This sequence belongs to the eIF-3 subunit C family. In terms of assembly, component of the eukaryotic translation initiation factor 3 (eIF-3) complex. The eIF-3 complex interacts with pix.

The protein localises to the cytoplasm. Functionally, component of the eukaryotic translation initiation factor 3 (eIF-3) complex, which is involved in protein synthesis of a specialized repertoire of mRNAs and, together with other initiation factors, stimulates binding of mRNA and methionyl-tRNAi to the 40S ribosome. The eIF-3 complex specifically targets and initiates translation of a subset of mRNAs involved in cell proliferation. This Drosophila yakuba (Fruit fly) protein is Eukaryotic translation initiation factor 3 subunit C.